A 225-amino-acid polypeptide reads, in one-letter code: NAD(P)H-hydrate epimerase (225 aa).

One can recognise a YjeF N-terminal domain in the interval 9–209 (MQTIDNYTVE…DIGLLTPQDF (201 aa)). A (6S)-NADPHX-binding site is contributed by 57 to 61 (NNGAD). 2 residues coordinate K(+): N58 and D119. Residues 123-129 (GTGLNNL) and D152 each bind (6S)-NADPHX. Residue T155 coordinates K(+).

This sequence belongs to the NnrE/AIBP family. It depends on K(+) as a cofactor.

The catalysed reaction is (6R)-NADHX = (6S)-NADHX. It carries out the reaction (6R)-NADPHX = (6S)-NADPHX. Its function is as follows. Catalyzes the epimerization of the S- and R-forms of NAD(P)HX, a damaged form of NAD(P)H that is a result of enzymatic or heat-dependent hydration. This is a prerequisite for the S-specific NAD(P)H-hydrate dehydratase to allow the repair of both epimers of NAD(P)HX. The polypeptide is NAD(P)H-hydrate epimerase (Leuconostoc sp. (strain C2)).